The sequence spans 149 residues: Major outer capsid protein (149 aa).

Homotrimer.

It localises to the virion. In terms of biological role, assembles to form an icosahedral capsid with a T=13 symmetry. Drives the penetration of the inner capsid (core) into the cytoplasm. This is Major outer capsid protein (P8) from Pseudomonas phage phi6 (Bacteriophage phi-6).